A 273-amino-acid chain; its full sequence is 3-methyl-2-oxobutanoate hydroxymethyltransferase (273 aa).

The Mg(2+) site is built by D49 and D88. 3-methyl-2-oxobutanoate is bound by residues 49-50 (DS), D88, and K118. E120 serves as a coordination point for Mg(2+). The active-site Proton acceptor is E187.

The protein belongs to the PanB family. As to quaternary structure, homodecamer; pentamer of dimers. Mg(2+) is required as a cofactor.

Its subcellular location is the cytoplasm. It catalyses the reaction 3-methyl-2-oxobutanoate + (6R)-5,10-methylene-5,6,7,8-tetrahydrofolate + H2O = 2-dehydropantoate + (6S)-5,6,7,8-tetrahydrofolate. It participates in cofactor biosynthesis; (R)-pantothenate biosynthesis; (R)-pantoate from 3-methyl-2-oxobutanoate: step 1/2. Catalyzes the reversible reaction in which hydroxymethyl group from 5,10-methylenetetrahydrofolate is transferred onto alpha-ketoisovalerate to form ketopantoate. The chain is 3-methyl-2-oxobutanoate hydroxymethyltransferase from Sinorhizobium fredii (strain NBRC 101917 / NGR234).